The following is a 474-amino-acid chain: UDP-N-acetylmuramoyl-L-alanyl-D-glutamate--2,6-diaminopimelate ligase (474 aa).

S21 is a binding site for UDP-N-acetyl-alpha-D-muramoyl-L-alanyl-D-glutamate. 93 to 99 (GTNGKSS) contributes to the ATP binding site. UDP-N-acetyl-alpha-D-muramoyl-L-alanyl-D-glutamate is bound by residues 139–140 (TT), S166, Q172, and R174. K206 is modified (N6-carboxylysine). Residues R367, 391 to 394 (DNPR), G441, and E445 contribute to the meso-2,6-diaminopimelate site. Residues 391–394 (DNPR) carry the Meso-diaminopimelate recognition motif motif.

It belongs to the MurCDEF family. MurE subfamily. It depends on Mg(2+) as a cofactor. Post-translationally, carboxylation is probably crucial for Mg(2+) binding and, consequently, for the gamma-phosphate positioning of ATP.

It localises to the cytoplasm. The enzyme catalyses UDP-N-acetyl-alpha-D-muramoyl-L-alanyl-D-glutamate + meso-2,6-diaminopimelate + ATP = UDP-N-acetyl-alpha-D-muramoyl-L-alanyl-gamma-D-glutamyl-meso-2,6-diaminopimelate + ADP + phosphate + H(+). Its pathway is cell wall biogenesis; peptidoglycan biosynthesis. Its function is as follows. Catalyzes the addition of meso-diaminopimelic acid to the nucleotide precursor UDP-N-acetylmuramoyl-L-alanyl-D-glutamate (UMAG) in the biosynthesis of bacterial cell-wall peptidoglycan. This chain is UDP-N-acetylmuramoyl-L-alanyl-D-glutamate--2,6-diaminopimelate ligase, found in Rickettsia bellii (strain RML369-C).